Reading from the N-terminus, the 381-residue chain is V-type proton ATPase subunit C 1-B (381 aa).

T2 carries the post-translational modification N-acetylthreonine.

It belongs to the V-ATPase C subunit family. As to quaternary structure, V-ATPase is a heteromultimeric enzyme made up of two complexes: the ATP-hydrolytic V1 complex and the proton translocation V0 complex. The V1 complex consists of three catalytic AB heterodimers that form a heterohexamer, three peripheral stalks each consisting of EG heterodimers, one central rotor including subunits D and F, and the regulatory subunits C and H. The proton translocation complex V0 consists of the proton transport subunit a, a ring of proteolipid subunits c9c'', rotary subunit d, subunits e and f, and two accessory subunits.

Functionally, subunit of the V1 complex of vacuolar(H+)-ATPase (V-ATPase), a multisubunit enzyme composed of a peripheral complex (V1) that hydrolyzes ATP and a membrane integral complex (V0) that translocates protons. V-ATPase is responsible for acidifying and maintaining the pH of intracellular compartments and in some cell types, is targeted to the plasma membrane, where it is responsible for acidifying the extracellular environment. Subunit C is necessary for the assembly of the catalytic sector of the enzyme and is likely to have a specific function in its catalytic activity. In Danio rerio (Zebrafish), this protein is V-type proton ATPase subunit C 1-B (atp6v1c1b).